The following is a 63-amino-acid chain: Large ribosomal subunit protein uL29 (63 aa).

This sequence belongs to the universal ribosomal protein uL29 family.

The protein is Large ribosomal subunit protein uL29 of Alcanivorax borkumensis (strain ATCC 700651 / DSM 11573 / NCIMB 13689 / SK2).